The primary structure comprises 517 residues: MDIVGGQNLRQMWDDLAGVYGDKTALIFESCEGIVRQFSYASLNEEINRTANLFYSLGIRKGDRVALHLDNCPEFIFCWFGLAKIGAIMVPINARLLGEESAWILQNSQVSLLVTSVQFYPMYREIRQDNSTPLNHICLIGEQLPADDGVSHFSQLQARQSATLCYTPALSTDDTAEILFTSGTTSRPKGVVITHYNLRFAGYYSAWQIALRDDDVYMTVMPAFHIDCQCTAAMPAFSAGSTFVLLEKYSARAFWDQVRRYQATVTECIPMMIRTLMVQPAAPTDRQHHLREVMFYLNLSAQEKDAFTERFGVRLLTSYGMTETIVGIIGDRPGDKRRWPSIGRVGFSYEAEIRDDQNRPLPAGEIGEICIKGIPGKTIFKEYYMQPEATAGALEPEGWLHTGDSGYQDEDGYFYFVDRRCNMIKRGGENVSCVELENIISAHPKIQDIVVVGIKDAIRDEAIKAFIVLNEGETLSEAEFFSFCENNMAKFKVPSFMEIRTDLPRNCSGKIIKKNLK.

The protein belongs to the ATP-dependent AMP-binding enzyme family.

The enzyme catalyses 4-(trimethylamino)butanoate + ATP + CoA = 4-(trimethylamino)butanoyl-CoA + AMP + diphosphate. It catalyses the reaction crotonobetaine + ATP + CoA = crotonobetainyl-CoA + AMP + diphosphate. It carries out the reaction (R)-carnitine + ATP + CoA = (R)-carnitinyl-CoA + AMP + diphosphate. Its pathway is amine and polyamine metabolism; carnitine metabolism. Catalyzes the transfer of CoA to carnitine, generating the initial carnitinyl-CoA needed for the CaiB reaction cycle. Also has activity toward crotonobetaine and gamma-butyrobetaine. This chain is Crotonobetaine/carnitine--CoA ligase, found in Salmonella choleraesuis (strain SC-B67).